Reading from the N-terminus, the 452-residue chain is GTPase Der (452 aa).

EngA-type G domains lie at 4-169 and 177-352; these read PVVA…PPAA and IKVA…ESHR. Residues 10–17, 57–61, 120–123, 183–190, 230–234, and 295–298 contribute to the GTP site; these read GRPNVGKS, DTGGL, NKCE, DTAGI, and NKWD. The 86-residue stretch at 353-438 folds into the KH-like domain; it reads RRVSTSVIND…PIRLIWRGKP (86 aa).

The protein belongs to the TRAFAC class TrmE-Era-EngA-EngB-Septin-like GTPase superfamily. EngA (Der) GTPase family. Associates with the 50S ribosomal subunit.

Functionally, GTPase that plays an essential role in the late steps of ribosome biogenesis. The sequence is that of GTPase Der from Microcystis aeruginosa (strain NIES-843 / IAM M-2473).